A 202-amino-acid chain; its full sequence is Matrix protein (202 aa).

The tract at residues 9 to 31 (KNRRDEDTQKSSPASAPLDDDDL) is disordered. The PPXY motif signature appears at 35–38 (PPEY). The essential for glycoprotein binding stretch occupies residues 115-151 (KLRRTFIFQWADSRGPLEGEELEYSQEITWDDDTEFV).

Belongs to the lyssavirus matrix protein family. Homomultimer. Interacts with nucleoprotein and with the cytoplasmic domain of glycoprotein. Interacts with host ATP6V1A; this interaction plays an important role in virion uncoating after viral entry.

It localises to the virion membrane. Its subcellular location is the host endomembrane system. It is found in the host cytoplasm. Functionally, plays a major role in assembly, budding and uncoating of virion after membrane fusion. Completely covers the ribonucleoprotein coil and keep it in condensed bullet-shaped form. Inhibits viral transcription and stimulates replication. Plays a major role in early induction of TRAIL-mediated apoptosis in infected neurons. Inhibits the integrated stress response (ISR) in the infected cell by blocking the formation of stress granules. The protein is Matrix protein (M) of Rabies virus (strain SAD B19) (RABV).